Reading from the N-terminus, the 108-residue chain is Iron-sulfur cluster assembly protein CyaY (108 aa).

The protein belongs to the frataxin family.

In terms of biological role, involved in iron-sulfur (Fe-S) cluster assembly. May act as a regulator of Fe-S biogenesis. This Burkholderia vietnamiensis (strain G4 / LMG 22486) (Burkholderia cepacia (strain R1808)) protein is Iron-sulfur cluster assembly protein CyaY.